A 204-amino-acid polypeptide reads, in one-letter code: tRNA (pseudouridine(54)-N(1))-methyltransferase (204 aa).

S-adenosyl-L-methionine contacts are provided by Leu-136 and Gly-158.

It belongs to the methyltransferase superfamily. TrmY family. As to quaternary structure, homodimer.

It localises to the cytoplasm. The enzyme catalyses pseudouridine(54) in tRNA + S-adenosyl-L-methionine = N(1)-methylpseudouridine(54) in tRNA + S-adenosyl-L-homocysteine + H(+). In terms of biological role, specifically catalyzes the N1-methylation of pseudouridine at position 54 (Psi54) in tRNAs. The sequence is that of tRNA (pseudouridine(54)-N(1))-methyltransferase from Pyrococcus abyssi (strain GE5 / Orsay).